The following is a 76-amino-acid chain: Precursor of CEP7 (76 aa).

An N-terminal signal peptide occupies residues 1–27 (MAKCTLTSLILLLIVLVLIQESHIVEG). Positions 28-61 (RPLKSSRISNVSKKFAAGNSNLSSKLTTEDHSLD) are excised as a propeptide. N-linked (GlcNAc...) asparagine glycosylation is found at Asn37 and Asn48. Residues 49-76 (LSSKLTTEDHSLDAFRPTNPGNSPGIGH) form a disordered region. Residues Pro65, Pro68, and Pro72 each carry the hydroxyproline modification.

It belongs to the C-terminally encoded plant signaling peptide (CEP) family. As to quaternary structure, interacts with CEP receptors (e.g. CEPR1 and CEPR2). Post-translationally, the mature small signaling peptide is generated by proteolytic processing of the longer precursor.

The protein localises to the secreted. It is found in the extracellular space. Its subcellular location is the apoplast. In terms of biological role, extracellular signaling peptide that may regulate primary root growth rate and systemic nitrogen (N)-demand signaling. Mediates up-regulation of genes involved in N uptake and assimilation pathways. The chain is Precursor of CEP7 from Arabidopsis thaliana (Mouse-ear cress).